The primary structure comprises 251 residues: 3-deoxy-manno-octulosonate cytidylyltransferase (251 aa).

It belongs to the KdsB family.

The protein localises to the cytoplasm. It catalyses the reaction 3-deoxy-alpha-D-manno-oct-2-ulosonate + CTP = CMP-3-deoxy-beta-D-manno-octulosonate + diphosphate. It participates in nucleotide-sugar biosynthesis; CMP-3-deoxy-D-manno-octulosonate biosynthesis; CMP-3-deoxy-D-manno-octulosonate from 3-deoxy-D-manno-octulosonate and CTP: step 1/1. The protein operates within bacterial outer membrane biogenesis; lipopolysaccharide biosynthesis. Functionally, activates KDO (a required 8-carbon sugar) for incorporation into bacterial lipopolysaccharide in Gram-negative bacteria. The sequence is that of 3-deoxy-manno-octulosonate cytidylyltransferase from Rhizobium etli (strain ATCC 51251 / DSM 11541 / JCM 21823 / NBRC 15573 / CFN 42).